The chain runs to 344 residues: Outer membrane protein assembly factor BamC (344 aa).

The N-terminal stretch at 1–24 (MAYSVQKSRLAKVAGVSLVLLLAA) is a signal peptide. Cys-25 carries the N-palmitoyl cysteine lipid modification. Cys-25 is lipidated: S-diacylglycerol cysteine.

It belongs to the BamC family. Part of the Bam complex, which is composed of the outer membrane protein BamA, and four lipoproteins BamB, BamC, BamD and BamE. Forms a subcomplex with BamD and BamE. The Bam complex has the shape of a hat, with the BamA beta-barrel crown in the outer membrane and the periplasmic brim formed by the BamA POTRA domains and the 4 lipoproteins.

Its subcellular location is the cell outer membrane. Part of the outer membrane protein assembly complex (Bam), which is involved in assembly and insertion of beta-barrel proteins into the outer membrane. Nonessential member of the complex that stabilizes the interaction between the essential proteins BamA and BamD. Efficient substrate folding and insertion into the outer membrane requires all 5 subunits. A lateral gate may open between the first and last strands of the BamA beta-barrel that allows substrate to insert into the outer membrane; comparison of the structures of complete and nearly complete Bam complexes show there is considerable movement of all 5 proteins. The protein is Outer membrane protein assembly factor BamC of Escherichia coli (strain K12).